Reading from the N-terminus, the 210-residue chain is Redox-sensing transcriptional repressor Rex (210 aa).

Positions 16–55 form a DNA-binding region, H-T-H motif; the sequence is IYMRTLQELLEDDVDVISSERLAKQCGVNPAQIRKDLAYF. 90–95 provides a ligand contact to NAD(+); sequence GLGNLG.

It belongs to the transcriptional regulatory Rex family. In terms of assembly, homodimer.

The protein localises to the cytoplasm. Its function is as follows. Modulates transcription in response to changes in cellular NADH/NAD(+) redox state. The chain is Redox-sensing transcriptional repressor Rex from Syntrophobacter fumaroxidans (strain DSM 10017 / MPOB).